The chain runs to 446 residues: Putative hydrolase YbfO (446 aa).

A signal peptide spans Met-1 to Ala-28.

The chain is Putative hydrolase YbfO (ybfO) from Bacillus subtilis (strain 168).